A 368-amino-acid polypeptide reads, in one-letter code: tRNA 2-selenouridine synthase (368 aa).

Residues 15 to 138 enclose the Rhodanese domain; sequence FLNQHPIMDV…LRQYLIGVIE (124 aa). Cys-98 (S-selanylcysteine intermediate) is an active-site residue.

Belongs to the SelU family. In terms of assembly, monomer.

It carries out the reaction 5-methylaminomethyl-2-thiouridine(34) in tRNA + selenophosphate + (2E)-geranyl diphosphate + H2O + H(+) = 5-methylaminomethyl-2-selenouridine(34) in tRNA + (2E)-thiogeraniol + phosphate + diphosphate. It catalyses the reaction 5-methylaminomethyl-2-thiouridine(34) in tRNA + (2E)-geranyl diphosphate = 5-methylaminomethyl-S-(2E)-geranyl-thiouridine(34) in tRNA + diphosphate. The enzyme catalyses 5-methylaminomethyl-S-(2E)-geranyl-thiouridine(34) in tRNA + selenophosphate + H(+) = 5-methylaminomethyl-2-(Se-phospho)selenouridine(34) in tRNA + (2E)-thiogeraniol. The catalysed reaction is 5-methylaminomethyl-2-(Se-phospho)selenouridine(34) in tRNA + H2O = 5-methylaminomethyl-2-selenouridine(34) in tRNA + phosphate. Involved in the post-transcriptional modification of the uridine at the wobble position (U34) of tRNA(Lys), tRNA(Glu) and tRNA(Gln). Catalyzes the conversion of 2-thiouridine (S2U-RNA) to 2-selenouridine (Se2U-RNA). Acts in a two-step process involving geranylation of 2-thiouridine (S2U) to S-geranyl-2-thiouridine (geS2U) and subsequent selenation of the latter derivative to 2-selenouridine (Se2U) in the tRNA chain. This chain is tRNA 2-selenouridine synthase, found in Shewanella baltica (strain OS223).